Reading from the N-terminus, the 59-residue chain is Putative potassium channel toxin Ts23 (59 aa).

An N-terminal signal peptide occupies residues 1 to 22 (MKAFYGILIIFILISMLDLSQQ). 3 disulfide bridges follow: cysteine 29–cysteine 50, cysteine 35–cysteine 55, and cysteine 39–cysteine 57.

It belongs to the short scorpion toxin superfamily. Potassium channel inhibitor family. Alpha-KTx 04 subfamily. As to expression, expressed by the venom gland.

It is found in the secreted. In terms of biological role, potently blocks Kv1.1/KCNA1 (85%), Kv1.2/KCNA2 (91%), Kv1.3/KCNA3 (89%), Kv1.6/KCNA6 (94%), and Shaker (97%). This chain is Putative potassium channel toxin Ts23, found in Tityus serrulatus (Brazilian scorpion).